We begin with the raw amino-acid sequence, 348 residues long: WRKY transcription factor WRKY71 (348 aa).

The stretch at 50–84 (VAALEAELKRMGAENRQLSEMLAAVAAKYEALQSQ) forms a coiled coil. Disordered stretches follow at residues 91 to 141 (ASAN…APHH) and 246 to 287 (GEHN…APVV). The span at 102-114 (NQSSTSEGGSVSP) shows a compositional bias: low complexity. The short motif at 116–122 (RKRKSES) is the Nuclear localization signal element. Residues 126 to 136 (SPPPPPPPHPH) show a composition bias toward pro residues. The segment at residues 187 to 253 (DLSLVVKDGY…YEGEHNHGQP (67 aa)) is a DNA-binding region (WRKY). A transcription repression of gibberellic acid (GA)-induced promoters region spans residues 267-348 (SGKSAGKPPH…RILELSPTKD (82 aa)). The segment covering 275-286 (PHAPAAAPPAPV) has biased composition (pro residues).

This sequence belongs to the WRKY group II-a family. Interacts with WRKY51; this interaction promotes W box binding of the complex WRKY51/WRKY71 in a zinc ion-dependent manner. Highly expressed in aleurone cells. In seeds, predominantly present in the plumule, radicle and scutellum of the embryo. Expressed in roots, stems, young leaves and spikelets.

Its subcellular location is the nucleus. Transcription repressor. Interacts specifically with the W box (5'-(T)TGAC[CT]-3'), a frequently occurring elicitor-responsive cis-acting element. Represses specifically gibberellic acid (GA)-induced promoters in aleurone cells, probably by interfering with GAM1. Regulates, probably indirectly, the activation of defense-related genes such as GF14E during defense response. Modulates plant innate immunity against X.oryzae pv. oryzae (Xoo). Confers resistance to the virulent bacterial pathogen X.oryzae pv. oryzae (Xoo) 13751, probably via the regulation of NPR1 and PR1b defense signaling pathways. In Oryza sativa subsp. indica (Rice), this protein is WRKY transcription factor WRKY71.